The sequence spans 196 residues: Small ribosomal subunit protein uS4m (196 aa).

In terms of domain architecture, S4 RNA-binding spans 88-154; the sequence is KRLDVILVRL…FKSNIRKNFQ (67 aa).

It belongs to the universal ribosomal protein uS4 family.

It is found in the mitochondrion. In Marchantia polymorpha (Common liverwort), this protein is Small ribosomal subunit protein uS4m (RPS4).